The following is a 113-amino-acid chain: UPF0060 membrane protein CV_3485 (113 aa).

The next 4 helical transmembrane spans lie at 12–32 (GLFV…WLVL), 37–57 (SLWL…LLTL), 67–87 (AAYG…VDGV), and 91–111 (RWDA…MLAP).

This sequence belongs to the UPF0060 family.

It is found in the cell inner membrane. This chain is UPF0060 membrane protein CV_3485, found in Chromobacterium violaceum (strain ATCC 12472 / DSM 30191 / JCM 1249 / CCUG 213 / NBRC 12614 / NCIMB 9131 / NCTC 9757 / MK).